A 127-amino-acid polypeptide reads, in one-letter code: Evasin-4 (127 aa).

The N-terminal stretch at 1–23 (MAFKYWFVFAAVLYARQWLSTKC) is a signal peptide. 4 disulfides stabilise this stretch: cysteine 50–cysteine 69, cysteine 65–cysteine 112, cysteine 86–cysteine 117, and cysteine 107–cysteine 126. N-linked (GlcNAc...) asparagine glycans are attached at residues asparagine 54, asparagine 64, asparagine 70, asparagine 77, asparagine 83, asparagine 106, and asparagine 114.

Belongs to the evasin C8 family. In terms of assembly, monomer.

The protein localises to the secreted. In terms of biological role, salivary chemokine-binding protein which has chemokine-neutralizing activity and binds to host chemokines CCL1, CCL3, CCL5, CCL7, CCL8, CCL11, CCL14, CCL15, CCL16, CCL17, CCL18, CCL19, CCL21, CCL22, CCL23, CCL24, CCL25 and CCL26 with nanomolar affinity. Binds to CCL3 and CCL5 with 1:1 stoichiometry. Although binding to CCL25 is observed, does not inhibit CCL25-induced chemotaxis. Has been shown to reduce cardiac injury and inflammation in mice through its anti-CCL5 activity. This chain is Evasin-4, found in Rhipicephalus sanguineus (Brown dog tick).